A 507-amino-acid polypeptide reads, in one-letter code: Putative F-box/LRR-repeat protein At4g00320 (507 aa).

The 49-residue stretch at 12–60 (RDGISGLPDAMICHILSFLPTKVAASTTVLAKRWKPLLAFMPNLDFDES) folds into the F-box domain. LRR repeat units follow at residues 135–163 (RGFG…KIQF), 187–212 (YVKM…LLMN), 214–240 (IWKE…KFSR), 317–348 (ILYL…TIRT), and 349–374 (GVHI…VFEG).

In Arabidopsis thaliana (Mouse-ear cress), this protein is Putative F-box/LRR-repeat protein At4g00320.